The primary structure comprises 160 residues: Nucleotide-binding protein PSHAa2277 (160 aa).

This sequence belongs to the YajQ family.

Functionally, nucleotide-binding protein. This chain is Nucleotide-binding protein PSHAa2277, found in Pseudoalteromonas translucida (strain TAC 125).